Here is a 232-residue protein sequence, read N- to C-terminus: Small ribosomal subunit protein uS3 (232 aa).

One can recognise a KH type-2 domain in the interval 39 to 107 (IREILHKELK…DVVINIVEIR (69 aa)).

Belongs to the universal ribosomal protein uS3 family. Part of the 30S ribosomal subunit. Forms a tight complex with proteins S10 and S14.

In terms of biological role, binds the lower part of the 30S subunit head. Binds mRNA in the 70S ribosome, positioning it for translation. This chain is Small ribosomal subunit protein uS3, found in Rhodopseudomonas palustris (strain HaA2).